A 638-amino-acid polypeptide reads, in one-letter code: NBPF family member NBPF6 (638 aa).

Coiled coils occupy residues 10–43 and 69–115; these read SERAEMNILEINQELRSQLAESNQQFRDLKEKFL and DSVL…KLRE. The segment at 157–285 is disordered; sequence HLVHKLSPEN…VPPRHHDKSN (129 aa). Positions 165–179 are enriched in acidic residues; sequence ENDEDEDEDEDDKDE. Residues 174–261 enclose the Olduvai 1 domain; that stretch reads EDDKDEEVEK…EEEEALNIPP (88 aa). Basic and acidic residues predominate over residues 192–202; that stretch reads EVQKTEEKEVP. The segment covering 214-226 has biased composition (low complexity); it reads SNSHNPSNSNQPH. Basic and acidic residues-rich tracts occupy residues 232-251 and 264-273; these read TFKEHEVDSALVVESEHPHD and QNDHEEEEGK. 2 consecutive Olduvai domains span residues 326 to 399 and 400 to 503; these read EKQS…ALVD and KIKK…SQAQ. Positions 563–584 are disordered; sequence MKNPPQLEDDALEGSASNTQGR.

It belongs to the NBPF family.

Its subcellular location is the cytoplasm. The sequence is that of NBPF family member NBPF6 from Homo sapiens (Human).